Consider the following 103-residue polypeptide: Small ribosomal subunit protein uS10 (103 aa).

Belongs to the universal ribosomal protein uS10 family. Part of the 30S ribosomal subunit.

Its function is as follows. Involved in the binding of tRNA to the ribosomes. In Methylibium petroleiphilum (strain ATCC BAA-1232 / LMG 22953 / PM1), this protein is Small ribosomal subunit protein uS10.